A 219-amino-acid polypeptide reads, in one-letter code: 3,4-dihydroxy-2-butanone 4-phosphate synthase (219 aa).

Residues 37 to 38 (RE), D42, 150 to 154 (RRGHT), and E174 each bind D-ribulose 5-phosphate. E38 is a Mg(2+) binding site. Residue H153 coordinates Mg(2+).

This sequence belongs to the DHBP synthase family. Homodimer. It depends on Mg(2+) as a cofactor. Mn(2+) serves as cofactor.

It carries out the reaction D-ribulose 5-phosphate = (2S)-2-hydroxy-3-oxobutyl phosphate + formate + H(+). It participates in cofactor biosynthesis; riboflavin biosynthesis; 2-hydroxy-3-oxobutyl phosphate from D-ribulose 5-phosphate: step 1/1. In terms of biological role, catalyzes the conversion of D-ribulose 5-phosphate to formate and 3,4-dihydroxy-2-butanone 4-phosphate. The chain is 3,4-dihydroxy-2-butanone 4-phosphate synthase from Oleidesulfovibrio alaskensis (strain ATCC BAA-1058 / DSM 17464 / G20) (Desulfovibrio alaskensis).